We begin with the raw amino-acid sequence, 401 residues long: Eukaryotic translation initiation factor 3 subunit M (401 aa).

The PCI domain maps to 188–356 (QRMLSHQFLV…RIVNVNSSTQ (169 aa)).

The protein belongs to the eIF-3 subunit M family. Component of the eukaryotic translation initiation factor 3 (eIF-3) complex.

It localises to the cytoplasm. Its function is as follows. Component of the eukaryotic translation initiation factor 3 (eIF-3) complex, which is involved in protein synthesis of a specialized repertoire of mRNAs and, together with other initiation factors, stimulates binding of mRNA and methionyl-tRNAi to the 40S ribosome. The eIF-3 complex specifically targets and initiates translation of a subset of mRNAs involved in cell proliferation. This chain is Eukaryotic translation initiation factor 3 subunit M (eif3m), found in Dictyostelium discoideum (Social amoeba).